The primary structure comprises 671 residues: Gametogenetin-binding protein 2-like (671 aa).

Disordered regions lie at residues 372 to 489 (REQK…ARVQ) and 532 to 562 (VRDS…SEVS). The span at 373-384 (EQKKLKKKKKKD) shows a compositional bias: basic residues. The span at 385-395 (EKKNLLHRQCD) shows a compositional bias: basic and acidic residues. The span at 396 to 420 (DTEANESDEEEEELRNEELDLEEES) shows a compositional bias: acidic residues. Over residues 455-472 (TKSKPKKQSKKKKQKKAA) the composition is skewed to basic residues. Composition is skewed to polar residues over residues 476–486 (MGNQKQMQATA) and 546–557 (GSRTSSAISSPE).

The protein is Gametogenetin-binding protein 2-like of Drosophila melanogaster (Fruit fly).